We begin with the raw amino-acid sequence, 237 residues long: Demethylmenaquinone methyltransferase (237 aa).

Residues Thr58, Asp79, and 106 to 107 (NA) each bind S-adenosyl-L-methionine.

This sequence belongs to the class I-like SAM-binding methyltransferase superfamily. MenG/UbiE family.

The enzyme catalyses a 2-demethylmenaquinol + S-adenosyl-L-methionine = a menaquinol + S-adenosyl-L-homocysteine + H(+). Its pathway is quinol/quinone metabolism; menaquinone biosynthesis; menaquinol from 1,4-dihydroxy-2-naphthoate: step 2/2. In terms of biological role, methyltransferase required for the conversion of demethylmenaquinol (DMKH2) to menaquinol (MKH2). The chain is Demethylmenaquinone methyltransferase from Bacillus mycoides (strain KBAB4) (Bacillus weihenstephanensis).